The sequence spans 607 residues: NADH-ubiquinone oxidoreductase chain 5 (607 aa).

The next 16 helical transmembrane spans lie at 3 to 23 (IFTTSILLIFILLLSPILISM), 35 to 55 (YTTTSIKFSFIISLLPLLMFF), 84 to 104 (FFSILFTSVALFVTWSIMQFS), 117 to 137 (FIKYLTLFLITMLILTSANNM), 140 to 160 (LFIGWEGVGIMSFLLIGWWYG), 171 to 191 (AILYNRIGDIGFILAMVWFSL), 210 to 230 (LIPLMGLLIAATGKSAQFGLH), 241 to 261 (TPVSALLHSSTMVVAGIFLLV), 272 to 292 (FILTTMLCLGALTTLFTAICA), 301 to 320 (IIAFSTSSQLGLMMVTLGMN), 324 to 344 (LAFLHICTHAFFKAMLFMCSG), 365 to 385 (IMPFTSSCLVIGSLALTGMPF), 405 to 427 (NAWALLITLIATSMTAMYSMRII), 457 to 477 (LAFGSIFAGFVISYNIPPTSI), 482 to 502 (MPWFLKTTALIISVLGFLIAL), and 586 to 606 (LYFMSFLINIILIIILYSINL).

Belongs to the complex I subunit 5 family. In terms of assembly, core subunit of respiratory chain NADH dehydrogenase (Complex I) which is composed of 45 different subunits.

The protein localises to the mitochondrion inner membrane. It catalyses the reaction a ubiquinone + NADH + 5 H(+)(in) = a ubiquinol + NAD(+) + 4 H(+)(out). Core subunit of the mitochondrial membrane respiratory chain NADH dehydrogenase (Complex I) which catalyzes electron transfer from NADH through the respiratory chain, using ubiquinone as an electron acceptor. Essential for the catalytic activity and assembly of complex I. The sequence is that of NADH-ubiquinone oxidoreductase chain 5 (Mtnd5) from Mus musculus (Mouse).